The primary structure comprises 84 residues: MYB-like transcription factor TCL1 (84 aa).

Positions 36-73 (TEQEEDLIFRMYRLVGDRWDLIARRVVGREAKEIERYW) constitute a Myb-like domain.

In terms of tissue distribution, expressed in inflorescences and trichomes of rosette and cauline leaves.

Its subcellular location is the nucleus. Functionally, MYB-type transcription factor involved in trichome cell specification. Acts as a negative regulator of trichome patterning and formation by direct binding to the cis-acting regulatory elements of GL1, thus suppressing the expression of GL1. The chain is MYB-like transcription factor TCL1 (TCL1) from Arabidopsis thaliana (Mouse-ear cress).